Reading from the N-terminus, the 371-residue chain is Alanine racemase (371 aa).

The active-site Proton acceptor; specific for D-alanine is lysine 35. Lysine 35 carries the N6-(pyridoxal phosphate)lysine modification. Substrate is bound at residue arginine 130. Tyrosine 256 (proton acceptor; specific for L-alanine) is an active-site residue. Methionine 304 serves as a coordination point for substrate.

This sequence belongs to the alanine racemase family. The cofactor is pyridoxal 5'-phosphate.

The catalysed reaction is L-alanine = D-alanine. It functions in the pathway amino-acid biosynthesis; D-alanine biosynthesis; D-alanine from L-alanine: step 1/1. Its function is as follows. Catalyzes the interconversion of L-alanine and D-alanine. May also act on other amino acids. The sequence is that of Alanine racemase (alr) from Verminephrobacter eiseniae (strain EF01-2).